Here is a 209-residue protein sequence, read N- to C-terminus: FAS-associated death domain protein (209 aa).

A DED domain is found at 3-81 (PFLVLLHSVS…RKDLLLRLDD (79 aa)). The Death domain maps to 97–181 (LRAAMEIICD…VVADLIEEDQ (85 aa)). The segment covering 187–200 (QSGSANPGSFTAWD) has biased composition (polar residues). The tract at residues 187 to 209 (QSGSANPGSFTAWDSGSAAPGAS) is disordered.

In terms of assembly, can self-associate. Component of the AIM2 PANoptosome complex, a multiprotein complex that drives inflammatory cell death (PANoptosis). Component of the death-induced signaling complex (DISC) composed of cell surface receptor FAS/CD95 or TNFRSF1A, adapter protein FADD and the CASP8 protease; recruitment of CASP8 to the complex is required for processing of CASP8 into the p18 and p10 subunits. Interacts (via death domain) with FAS (via death domain). Interacts directly (via DED domain) with NOL3 (via CARD domain); inhibits death-inducing signaling complex (DISC) assembly by inhibiting the increase in FAS-FADD binding induced by FAS activation. Interacts with CFLAR, PEA15 and MBD4. When phosphorylated, part of a complex containing HIPK3 and FAS. May interact with MAVS/IPS1. Interacts with MOCV v-CFLAR protein and PIDD1. Interacts with RIPK1 and TRADD. Interacts with stimulated TNFRSF10B. Interacts with DDX24. Post-translationally, phosphorylated.

It is found in the cytoplasm. Apoptotic adapter molecule that recruits caspases CASP8 or CASP10 to the activated FAS/CD95 or TNFRSF1A/TNFR-1 receptors. The resulting aggregate called the death-inducing signaling complex (DISC) performs CASP8 proteolytic activation. Active CASP8 initiates the subsequent cascade of caspases mediating apoptosis. Involved in interferon-mediated antiviral immune response, playing a role in the positive regulation of interferon signaling. The polypeptide is FAS-associated death domain protein (Bos taurus (Bovine)).